The following is a 438-amino-acid chain: Glutamate-1-semialdehyde 2,1-aminomutase (438 aa).

Lys277 bears the N6-(pyridoxal phosphate)lysine mark.

This sequence belongs to the class-III pyridoxal-phosphate-dependent aminotransferase family. HemL subfamily. As to quaternary structure, homodimer. Pyridoxal 5'-phosphate is required as a cofactor.

It is found in the cytoplasm. It catalyses the reaction (S)-4-amino-5-oxopentanoate = 5-aminolevulinate. The protein operates within porphyrin-containing compound metabolism; protoporphyrin-IX biosynthesis; 5-aminolevulinate from L-glutamyl-tRNA(Glu): step 2/2. It functions in the pathway porphyrin-containing compound metabolism; chlorophyll biosynthesis. In Synechococcus sp. (strain CC9311), this protein is Glutamate-1-semialdehyde 2,1-aminomutase.